A 717-amino-acid polypeptide reads, in one-letter code: Polyribonucleotide nucleotidyltransferase (717 aa).

The Mg(2+) site is built by Asp-487 and Asp-493. In terms of domain architecture, KH spans 554 to 613 (PRITVINVPKDKIRDVIGTGGKVIREIVEYSGCKIDIEDDGTIKIAATSDEQAQKAIDRI). Positions 623-691 (GQIYTGKVVK…DRGKVKLSMR (69 aa)) constitute an S1 motif domain.

It belongs to the polyribonucleotide nucleotidyltransferase family. It depends on Mg(2+) as a cofactor.

It is found in the cytoplasm. It catalyses the reaction RNA(n+1) + phosphate = RNA(n) + a ribonucleoside 5'-diphosphate. Involved in mRNA degradation. Catalyzes the phosphorolysis of single-stranded polyribonucleotides processively in the 3'- to 5'-direction. This chain is Polyribonucleotide nucleotidyltransferase, found in Acidiphilium cryptum (strain JF-5).